Reading from the N-terminus, the 390-residue chain is Phosphopentomutase (390 aa).

Mn(2+) contacts are provided by Asp-12, Asp-284, His-289, Asp-325, His-326, and His-337.

Belongs to the phosphopentomutase family. The cofactor is Mn(2+).

Its subcellular location is the cytoplasm. The enzyme catalyses 2-deoxy-alpha-D-ribose 1-phosphate = 2-deoxy-D-ribose 5-phosphate. The catalysed reaction is alpha-D-ribose 1-phosphate = D-ribose 5-phosphate. It functions in the pathway carbohydrate degradation; 2-deoxy-D-ribose 1-phosphate degradation; D-glyceraldehyde 3-phosphate and acetaldehyde from 2-deoxy-alpha-D-ribose 1-phosphate: step 1/2. Its function is as follows. Isomerase that catalyzes the conversion of deoxy-ribose 1-phosphate (dRib-1-P) and ribose 1-phosphate (Rib-1-P) to deoxy-ribose 5-phosphate (dRib-5-P) and ribose 5-phosphate (Rib-5-P), respectively. This chain is Phosphopentomutase, found in Macrococcus caseolyticus (strain JCSC5402) (Macrococcoides caseolyticum).